The sequence spans 1692 residues: Cullin-7 (1692 aa).

Residues 348–421 (RTAFASVNTY…HWHMLEILGF (74 aa)) enclose the CPH domain. Residues 791 to 970 (PIQIPFFDVF…HTRLFYMVRA (180 aa)) form the DOC domain. The segment covering 1319–1335 (VAHEDSGKEHKSKKEDA) has biased composition (basic and acidic residues). Residues 1319–1374 (VAHEDSGKEHKSKKEDAAGETAAVAMADEEEEEGKKEEGEEEEGEGEEELEEEEER) form a disordered region. Acidic residues predominate over residues 1357–1374 (GEEEEGEGEEELEEEEER). Lysine 1570 is covalently cross-linked (Glycyl lysine isopeptide (Lys-Gly) (interchain with G-Cter in NEDD8)).

This sequence belongs to the cullin family. Component of the 3M complex, composed of core components CUL7, CCDC8 and OBSL1. Component of the Cul7-RING(FBXW8) complex consisting of CUL7, RBX1, SKP1 and FBXW8. Within the Cul7-RING(FBXW8) complex interacts with FBXW8 and RBX1, but not with SKP1. Interacts with CUL1 (via the C-terminal domain); the interaction seems to be mediated by FBXW8; it is likely specific to FBXW8, but not other F-box proteins. Interacts (via the CPH domain) with p53/TP53; the interaction preferentially involves tetrameric and dimeric p53/TP53; this interaction recruits p53/TP53 for ubiquitination by neddylated CUL1-RBX1. The CUL7-CUL9 heterodimer seems to interact specifically with p53/TP53. Interacts with FBXW8; interaction is mutually exclusive of binding to CUL9 or p53/TP53. Interacts with CUL9; leading to inhibited CUL9 activity. Interacts with OBSL1. Interacts (as part of the 3M complex) with HDAC4 and HDAC5; it is negatively regulated by ANKRA2.

It is found in the cytoplasm. The protein localises to the cytoskeleton. It localises to the microtubule organizing center. The protein resides in the centrosome. Its subcellular location is the perinuclear region. It is found in the golgi apparatus. The protein operates within protein modification; protein ubiquitination. Functionally, core component of the 3M and Cul7-RING(FBXW8) complexes, which mediate the ubiquitination and subsequent proteasomal degradation of target proteins. Core component of the 3M complex, a complex required to regulate microtubule dynamics and genome integrity. It is unclear how the 3M complex regulates microtubules, it could act by controlling the level of a microtubule stabilizer. The Cul7-RING(FBXW8) complex alone lacks ubiquitination activity and does not promote polyubiquitination and proteasomal degradation of p53/TP53. However it mediates recruitment of p53/TP53 for ubiquitination by neddylated CUL1-RBX1. Interaction with CUL9 is required to inhibit CUL9 activity and ubiquitination of BIRC5. The Cul7-RING(FBXW8) complex also mediates ubiquitination and consequent degradation of target proteins such as GORASP1, IRS1 and MAP4K1/HPK1. Ubiquitination of GORASP1 regulates Golgi morphogenesis and dendrite patterning in brain. Mediates ubiquitination and degradation of IRS1 in a mTOR-dependent manner: the Cul7-RING(FBXW8) complex recognizes and binds IRS1 previously phosphorylated by S6 kinase (RPS6KB1 or RPS6KB2). The Cul7-RING(FBXW8) complex also mediates ubiquitination of MAP4K1/HPK1: recognizes and binds autophosphorylated MAP4K1/HPK1, leading to its degradation, thereby affecting cell proliferation and differentiation. Acts as a regulator in trophoblast cell epithelial-mesenchymal transition and placental development. While the Cul7-RING(FBXW8) and the 3M complexes are associated and involved in common processes, CUL7 and the Cul7-RING(FBXW8) complex may have additional functions. Probably plays a role in the degradation of proteins involved in endothelial proliferation and/or differentiation. In Rattus norvegicus (Rat), this protein is Cullin-7 (Cul7).